We begin with the raw amino-acid sequence, 163 residues long: MKVSKAIVALAALCMALLAPAAGSKELTNIDGDLNNRHLRQESAELATTPEEIGVKKDSNNPLQRRDQALVSAHRVYDPVSGLACALVGDCMACPTSEKDETFCRETGYRQELDCPRPKDPKDAALLTKPEDEREIRFKACSPADTARPGVEVVKFEVRNVLS.

Residues M1–G23 form the signal peptide. Positions R37 to E52 match the RxLR-dEER motif.

It belongs to the RxLR effector family.

Its subcellular location is the secreted. It localises to the host cell membrane. Functionally, effector that enhances P.infestans colonization of Nicotiana benthamiana leaves. The polypeptide is RxLR effector protein PITG_13625 (Phytophthora infestans (strain T30-4) (Potato late blight agent)).